The primary structure comprises 287 residues: 4-diphosphocytidyl-2-C-methyl-D-erythritol kinase (287 aa).

Residue Lys14 is part of the active site. ATP is bound at residue 96–106 (PWGAGLGGGSS). The active site involves Asp138.

Belongs to the GHMP kinase family. IspE subfamily.

It catalyses the reaction 4-CDP-2-C-methyl-D-erythritol + ATP = 4-CDP-2-C-methyl-D-erythritol 2-phosphate + ADP + H(+). Its pathway is isoprenoid biosynthesis; isopentenyl diphosphate biosynthesis via DXP pathway; isopentenyl diphosphate from 1-deoxy-D-xylulose 5-phosphate: step 3/6. Its function is as follows. Catalyzes the phosphorylation of the position 2 hydroxy group of 4-diphosphocytidyl-2C-methyl-D-erythritol. The polypeptide is 4-diphosphocytidyl-2-C-methyl-D-erythritol kinase (Methylibium petroleiphilum (strain ATCC BAA-1232 / LMG 22953 / PM1)).